Reading from the N-terminus, the 690-residue chain is Protein-glutamine gamma-glutamyltransferase 2 (690 aa).

Alanine 2 is subject to N-acetylalanine. 2 cysteine pairs are disulfide-bonded: cysteine 230/cysteine 370 and cysteine 370/cysteine 371. Active-site residues include cysteine 277, histidine 335, and aspartate 358. Ca(2+)-binding residues include asparagine 398, aspartate 400, glutamate 436, glutamate 446, and glutamate 451. At lysine 467 the chain carries N6-acetyllysine. 479–486 (RIRVGQNM) is a GTP binding site. Glutamate 542 contributes to the Ca(2+) binding site. 583-586 (RDIY) is a GTP binding site. Residue glutamine 636 forms an Isoglutamyl lysine isopeptide (Gln-Lys) (interchain with K-?) linkage.

The protein belongs to the transglutaminase superfamily. Transglutaminase family. As to quaternary structure, monomer. Interacts with phospholipase C; promoting alpha-1 adrenergic receptor signaling. Interacts with PLCD1. Ca(2+) serves as cofactor. Post-translationally, disulfide bond formation inactivates the calcium-dependent acyltransferase activity. Cys-370 can form disulfide bonds with both Cys-230 and Cys-371: formation of a disulfide bond between Cys-230 and Cys-370 facilitates formation of the disulfide between Cys-370 and Cys-371, which promotes inactivation of the acyltransferase activity. May also form interchain disulfids between Cys-230 and Cys-370. Ca(2+) protects against disulfide bond formation and inactivation. Auto-transglutaminated: Forms covalent cross-links mediated by transglutaminase between Gln-636 and the epsilon-amino group of a lysine residue of itself or HMGB1, forming homopolymers and heteropolymers, respectively. In terms of processing, S-nitrosylated, leading to inactivation of the acyltransferase activity.

It is found in the cytoplasm. The protein resides in the cytosol. The protein localises to the nucleus. Its subcellular location is the chromosome. It localises to the secreted. It is found in the extracellular space. The protein resides in the extracellular matrix. The protein localises to the cell membrane. Its subcellular location is the mitochondrion. It carries out the reaction L-glutaminyl-[protein] + L-lysyl-[protein] = [protein]-L-lysyl-N(6)-5-L-glutamyl-[protein] + NH4(+). The catalysed reaction is L-glutaminyl-[protein] + serotonin = 5-serotonyl-L-glutamyl-[protein] + NH4(+). It catalyses the reaction L-glutaminyl-[protein] + dopamine = 5-dopaminyl-L-glutamyl-[protein] + NH4(+). The enzyme catalyses L-glutaminyl-[protein] + histamine = 5-histaminyl-L-glutamyl-[protein] + NH4(+). It carries out the reaction L-glutaminyl-[protein] + (R)-noradrenaline = 5-(R)-noradrenalinyl-L-glutamyl-[protein] + NH4(+). The catalysed reaction is L-glutaminyl-[protein] + H2O = L-glutamyl-[protein] + NH4(+). Its activity is regulated as follows. Acyltransferase activity is regulated by the binding of GTP and Ca(2+): inactivated by GTP, which stabilizes its closed structure, thereby obstructing the accessibility of substrates to the active sites. In contrast, Ca(2+) acts as a cofactor by inducing conformational change to the active open form. In absence of Ca(2+), Mg(2+) may bind Ca(2+)-binding sites, promoting GTP-binding and subsequent inhibition of the acyltransferase activity. Extracellularly reduced and activated by CLIC3. Its function is as follows. Calcium-dependent acyltransferase that catalyzes the formation of covalent bonds between peptide-bound glutamine and various primary amines, such as gamma-amino group of peptide-bound lysine, or mono- and polyamines, thereby producing cross-linked or aminated proteins, respectively. Involved in many biological processes, such as bone development, angiogenesis, wound healing, cellular differentiation, chromatin modification and apoptosis. Acts as a protein-glutamine gamma-glutamyltransferase by mediating the cross-linking of proteins, such as ACO2, HSPB6, FN1, HMGB1, RAP1GDS1, SLC25A4/ANT1, SPP1 and WDR54. Under physiological conditions, the protein cross-linking activity is inhibited by GTP; inhibition is relieved by Ca(2+) in response to various stresses. When secreted, catalyzes cross-linking of proteins of the extracellular matrix, such as FN1 and SPP1 resulting in the formation of scaffolds. Plays a key role during apoptosis, both by (1) promoting the cross-linking of cytoskeletal proteins resulting in condensation of the cytoplasm, and by (2) mediating cross-linking proteins of the extracellular matrix, resulting in the irreversible formation of scaffolds that stabilize the integrity of the dying cells before their clearance by phagocytosis, thereby preventing the leakage of harmful intracellular components. In addition to protein cross-linking, can use different monoamine substrates to catalyze a vast array of protein post-translational modifications: mediates aminylation of serotonin, dopamine, noradrenaline or histamine into glutamine residues of target proteins to generate protein serotonylation, dopaminylation, noradrenalinylation or histaminylation, respectively. Mediates protein serotonylation of small GTPases during activation and aggregation of platelets, leading to constitutive activation of these GTPases. Plays a key role in chromatin organization by mediating serotonylation and dopaminylation of histone H3. Catalyzes serotonylation of 'Gln-5' of histone H3 (H3Q5ser) during serotonergic neuron differentiation, thereby facilitating transcription. Acts as a mediator of neurotransmission-independent role of nuclear dopamine in ventral tegmental area (VTA) neurons: catalyzes dopaminylation of 'Gln-5' of histone H3 (H3Q5dop), thereby regulating relapse-related transcriptional plasticity in the reward system. Regulates vein remodeling by mediating serotonylation and subsequent inactivation of ATP2A2/SERCA2. Also acts as a protein deamidase by mediating the side chain deamidation of specific glutamine residues of proteins to glutamate. Catalyzes specific deamidation of protein gliadin, a component of wheat gluten in the diet. May also act as an isopeptidase cleaving the previously formed cross-links. Also able to participate in signaling pathways independently of its acyltransferase activity: acts as a signal transducer in alpha-1 adrenergic receptor-mediated stimulation of phospholipase C-delta (PLCD) activity and is required for coupling alpha-1 adrenergic agonists to the stimulation of phosphoinositide lipid metabolism. In Cavia cutleri (Guinea pig), this protein is Protein-glutamine gamma-glutamyltransferase 2.